Consider the following 172-residue polypeptide: Peptide deformylase (172 aa).

Positions 94 and 136 each coordinate Fe cation. Residue Glu-137 is part of the active site. His-140 is a Fe cation binding site.

It belongs to the polypeptide deformylase family. Fe(2+) serves as cofactor.

It catalyses the reaction N-terminal N-formyl-L-methionyl-[peptide] + H2O = N-terminal L-methionyl-[peptide] + formate. In terms of biological role, removes the formyl group from the N-terminal Met of newly synthesized proteins. Requires at least a dipeptide for an efficient rate of reaction. N-terminal L-methionine is a prerequisite for activity but the enzyme has broad specificity at other positions. This is Peptide deformylase from Pelagibacter ubique (strain HTCC1062).